A 505-amino-acid chain; its full sequence is SusD-like protein P2 (505 aa).

Positions 1 to 17 (MKKYKITFIVLLLTLVG) are cleaved as a signal peptide. Cysteine 18 carries N-palmitoyl cysteine lipidation. Residue cysteine 18 is the site of S-diacylglycerol cysteine attachment.

It belongs to the SusD family.

The protein localises to the cell outer membrane. Polysaccharide-binding protein probably involved in ulvan degradation. Ulvan is the main polysaccharide component of the Ulvales (green seaweed) cell wall. It is composed of disaccharide building blocks comprising 3-sulfated rhamnose (Rha3S) linked to D-glucuronic acid (GlcA), L-iduronic acid (IduA), or D-xylose (Xyl). The SusD-like protein may mediate ulvan oligomer-binding before transport in the periplasm for further degradation. The protein is SusD-like protein P2 of Formosa agariphila (strain DSM 15362 / KCTC 12365 / LMG 23005 / KMM 3901 / M-2Alg 35-1).